Consider the following 234-residue polypeptide: Transmembrane protein 65 (234 aa).

A mitochondrion-targeting transit peptide spans 1-55; sequence MSRLLPLLGSRTARSLRPGPAAAPRLPSWCCCGRGLLALGVPGGPRLLGTHPKKE. Residues 56-110 lie on the Cytoplasmic side of the membrane; sequence PMEALNTAQGARDFIYSLHSTERSCLLKELHRFESIAIAQEKLEALPPTPGQLRY. The helical transmembrane segment at 111 to 131 threads the bilayer; it reads VFFHNAIPFVGFGFLDNAIMI. The Extracellular portion of the chain corresponds to 132–138; sequence VAGTQIE. The chain crosses the membrane as a helical span at residues 139–159; sequence LSIGIILGISTMAAAALGNLV. The Cytoplasmic portion of the chain corresponds to 160 to 203; sequence SDLAGLGLAGYVEALASRLGLSIPDLTPKQVDMWQTRVSTHLGK. Residues 204–224 form a helical membrane-spanning segment; it reads AVGVTIGCILGMFPLIFFGGS. Residues 225-234 lie on the Extracellular side of the membrane; the sequence is EEDEKLETTN.

As to quaternary structure, monomer. Homodimer. Interacts with GJA1. Interacts weakly with DSP. Interacts with SCN1B. Predominantly expressed in the ventricular tissue (at protein level).

The protein localises to the cell membrane. It localises to the mitochondrion inner membrane. Functionally, essential for maintaining proper cardiac intercalated disk (ICD) structure and function as well as cardiac conduction velocity in the heart. Its association with SCN1B is required for stabilizing the perinexus in the ICD and for localization of GJA1 and SCN5A to the ICD. May regulate the function of the gap junction protein GJA1 and may contribute to the stability and proper localization of GJA1 to cardiac intercalated disk thereby regulating gap junction communication. Regulates mitochondrial respiration and mitochondrial DNA copy number maintenance. The sequence is that of Transmembrane protein 65 (Tmem65) from Mus musculus (Mouse).